The primary structure comprises 369 residues: Putative 2-aminoethylphosphonate import ATP-binding protein PhnT (369 aa).

Residues 19-250 (IVLDSLRVAY…PPNRFAAEFL (232 aa)) enclose the ABC transporter domain. 51-58 (GPSGSGKT) contacts ATP.

Belongs to the ABC transporter superfamily. 2-aminoethylphosphonate importer (TC 3.A.1.11.5) family.

The protein localises to the cell inner membrane. Its function is as follows. Probably part of the PhnSTUV complex (TC 3.A.1.11.5) involved in 2-aminoethylphosphonate import. Probably responsible for energy coupling to the transport system. This is Putative 2-aminoethylphosphonate import ATP-binding protein PhnT (phnT) from Salmonella paratyphi A (strain ATCC 9150 / SARB42).